Here is a 248-residue protein sequence, read N- to C-terminus: NH(3)-dependent NAD(+) synthetase (248 aa).

An ATP-binding site is contributed by 31–38 (GLSGGVDS). Residue Asp-37 coordinates Mg(2+). Arg-114 is a binding site for deamido-NAD(+). Thr-134 is an ATP binding site. Glu-139 contributes to the Mg(2+) binding site. Deamido-NAD(+)-binding residues include Lys-147 and Asp-154. Lys-163 and Thr-185 together coordinate ATP. 232–233 (HK) contributes to the deamido-NAD(+) binding site.

This sequence belongs to the NAD synthetase family. In terms of assembly, homodimer.

The catalysed reaction is deamido-NAD(+) + NH4(+) + ATP = AMP + diphosphate + NAD(+) + H(+). The protein operates within cofactor biosynthesis; NAD(+) biosynthesis; NAD(+) from deamido-NAD(+) (ammonia route): step 1/1. Catalyzes the ATP-dependent amidation of deamido-NAD to form NAD. Uses ammonia as a nitrogen source. The polypeptide is NH(3)-dependent NAD(+) synthetase (Mycoplasma pneumoniae (strain ATCC 29342 / M129 / Subtype 1) (Mycoplasmoides pneumoniae)).